The primary structure comprises 240 residues: MNIISEHGFRIDGRRPAQIRNINTRLGLNRNAEGSCYLEHGNTKVLCAVYGPYEGKSSKRIEDKCAIVCQYSATKFSGLERKNRTRGDRKSTEISRLLEKAFESVILTEAFPRSQLDIFCEVIQGDGSNLAACVNATSLALADAGIPMKGIASAATCGVVDGKPIVDLTSREETDLLPRVTLATICGRDEVILVELQNRLHIDHLSTVMDAAKATCADVYECLAVVAQQHLKACAPILGN.

It belongs to the RNase PH family. In terms of assembly, component of the RNA exosome complex.

It localises to the cytoplasm. It is found in the nucleus. Its subcellular location is the nucleolus. The protein resides in the nucleoplasm. In terms of biological role, non-catalytic component of the RNA exosome complex which has 3'-&gt;5' exoribonuclease activity and participates in a multitude of cellular RNA processing and degradation events. In Caenorhabditis elegans, this protein is Putative exosome complex component RRP41 (exos-4.1).